Consider the following 22-residue polypeptide: Melittin-related peptide FQ-22-1 (22 aa).

A Glutamine amide modification is found at glutamine 22.

Expressed by the skin glands.

Its subcellular location is the secreted. The chain is Melittin-related peptide FQ-22-1 from Rana arvalis (Moor frog).